Here is a 292-residue protein sequence, read N- to C-terminus: Non-homologous end joining protein Ku (292 aa).

Residues 12 to 196 enclose the Ku domain; it reads KLSLVTCPVV…KITKDMVELA (185 aa). The tract at residues 231–292 is disordered; that stretch reads KPIKLPEPEE…RSAARQRKAG (62 aa). The span at 271-292 shows a compositional bias: basic residues; it reads APAHRRPAKKAHRSAARQRKAG.

The protein belongs to the prokaryotic Ku family. As to quaternary structure, homodimer. Interacts with LigD.

Its function is as follows. With LigD forms a non-homologous end joining (NHEJ) DNA repair enzyme, which repairs dsDNA breaks with reduced fidelity. Binds linear dsDNA with 5'- and 3'- overhangs but not closed circular dsDNA nor ssDNA. Recruits and stimulates the ligase activity of LigD. This Bradyrhizobium sp. (strain ORS 278) protein is Non-homologous end joining protein Ku.